The sequence spans 890 residues: Translation initiation factor IF-2 (890 aa).

The disordered stretch occupies residues 45 to 303 (LIDHLNQKNS…SLQQGFQKPA (259 aa)). The segment covering 67-81 (STLNIPGTGGKSKSV) has biased composition (polar residues). Residues 92–217 (VKRDPQEAER…RMAEENKWTD (126 aa)) are compositionally biased toward basic and acidic residues. Residues 252-266 (GRGRNAKAARPKKGN) are compositionally biased toward basic residues. Basic and acidic residues predominate over residues 267-280 (KHAESKADREEARA). Positions 389–558 (PRAPVVTIMG…LLQAEVLELK (170 aa)) constitute a tr-type G domain. Residues 398–405 (GHVDHGKT) form a G1 region. GTP is bound at residue 398-405 (GHVDHGKT). Residues 423–427 (GITQH) are G2. The tract at residues 444 to 447 (DTPG) is G3. GTP contacts are provided by residues 444 to 448 (DTPGH) and 498 to 501 (NKID). A G4 region spans residues 498 to 501 (NKID). Residues 534–536 (SAK) are G5. An N6-acetyllysine modification is found at Lys-808.

It belongs to the TRAFAC class translation factor GTPase superfamily. Classic translation factor GTPase family. IF-2 subfamily.

It is found in the cytoplasm. Its function is as follows. One of the essential components for the initiation of protein synthesis. Protects formylmethionyl-tRNA from spontaneous hydrolysis and promotes its binding to the 30S ribosomal subunits. Also involved in the hydrolysis of GTP during the formation of the 70S ribosomal complex. The sequence is that of Translation initiation factor IF-2 from Shigella boydii serotype 18 (strain CDC 3083-94 / BS512).